The sequence spans 2448 residues: Non-reducing polyketide synthase mapC (2448 aa).

The N-terminal acylcarrier protein transacylase domain (SAT) stretch occupies residues 14 to 226 (VLFGPQCPDI…HHEAHREGIQ (213 aa)). The segment at 330 to 350 (GFSNESPQPSTASLSNSVQTF) is disordered. A Ketosynthase family 3 (KS3) domain is found at 359-775 (ASPIAITGMA…GSNAALIVKE (417 aa)). Catalysis depends on for beta-ketoacyl synthase activity residues C524, H659, and H698. The malonyl-CoA:ACP transacylase (MAT) domain stretch occupies residues 885–1188 (LCFGGQNGLT…HKIDLGGSSG (304 aa)). The active-site For acyl/malonyl transferase activity is S972. The N-terminal hotdog fold stretch occupies residues 1256-1388 (GQEAGLLCQL…GTVCLHQERS (133 aa)). A PKS/mFAS DH domain is found at 1256–1565 (GQEAGLLCQL…FTSVSIRSLT (310 aa)). A product template (PT) domain region spans residues 1261-1564 (LLCQLSESPD…RFTSVSIRSL (304 aa)). Catalysis depends on H1290, which acts as the Proton acceptor; for dehydratase activity. The C-terminal hotdog fold stretch occupies residues 1414-1565 (ASNGLKGSTV…FTSVSIRSLT (152 aa)). D1471 acts as the Proton donor; for dehydratase activity in catalysis. Positions 1610–1684 (AKDLATVQEM…GLVEHIFPGH (75 aa)) constitute a Carrier domain. An O-(pantetheine 4'-phosphoryl)serine modification is found at S1644. The segment at 1841-2076 (PYALEHDLLQ…GFEWVDWTNN (236 aa)) is methyltransferase (CMeT) domain. Active-site for thioesterase activity residues include S2227, D2385, and H2417.

The protein resides in the cytoplasm. It localises to the cytosol. The catalysed reaction is 3 malonyl-CoA + acetyl-CoA + S-adenosyl-L-methionine + H(+) = 5-methylorsellinate + S-adenosyl-L-homocysteine + 3 CO2 + 4 CoA. It participates in secondary metabolite biosynthesis; terpenoid biosynthesis. In terms of biological role, non-reducing polyketide synthase; part of the gene cluster that mediates the biosynthesis of mycophenolic acid (MPA), the first isolated antibiotic natural product in the world obtained from a culture of Penicillium brevicompactum in 1893. MpaC catalyzes the synthesis of 5-methylorsellinic acid (5MOA) via the condensation of 1 acetyl-CoA starter unit with 3 malonyl-CoA units and one methylation step. The first step of the pathway is the synthesis of 5-methylorsellinic acid (5MOA) by the cytosolic polyketide synthase mpaC. 5MOA is then converted to the phthalide compound 5,7-dihydroxy-4,6-dimethylphthalide (DHMP) by the endoplasmic reticulum-bound cytochrome P450 monooxygenase mpaDE. MpaDE first catalyzes hydroxylation of 5-MOA to 4,6-dihydroxy-2-(hydroxymethyl)-3-methylbenzoic acid (DHMB). MpaDE then acts as a lactone synthase that catalyzes the ring closure to convert DHMB into DHMP. The next step is the prenylation of DHMP by the Golgi apparatus-associated prenyltransferase mpaA to yield farnesyl-DHMP (FDHMP). The ER-bound oxygenase mpaB then mediates the oxidative cleavage the C19-C20 double bond in FDHMP to yield FDHMP-3C via a mycophenolic aldehyde intermediate. The O-methyltransferase mpaG catalyzes the methylation of FDHMP-3C to yield MFDHMP-3C. After the cytosolic methylation of FDHMP-3C, MFDHMP-3C enters into peroxisomes probably via free diffusion due to its low molecular weight. Upon a peroxisomal CoA ligation reaction, catalyzed by a beta-oxidation component enzyme acyl-CoA ligase ACL891, MFDHMP-3C-CoA would then be restricted to peroxisomes for the following beta-oxidation pathway steps. The peroxisomal beta-oxidation machinery than converts MFDHMP-3C-CoA into MPA_CoA, via a beta-oxidation chain-shortening process. Finally mpaH acts as a peroxisomal acyl-CoA hydrolase with high substrate specificity toward MPA-CoA to release the final product MPA. This chain is Non-reducing polyketide synthase mapC, found in Penicillium brevicompactum.